The primary structure comprises 423 residues: Ribosome biogenesis protein WDR12 homolog (423 aa).

Residues 10–93 are ubiquitin-like (UBL) domain; the sequence is VQVHLKTKQE…EDAIEIEYVE (84 aa). 7 WD repeats span residues 105–142, 144–186, 193–232, 253–291, 293–332, 338–378, and 382–420; these read LHDDWVSAVKVSGKWILTGCYDNTLNIWTHKGKHILTI, GHTA…NAVE, GHERGVDSISVSPDATRFATGSWDTMLKVWSAAEDDAGGD, GHRESISAVQWIDTSTLLTTSWDHTMKIWDLSLEGIKTE, STNKSIFDASYSNLNRLIVTASADKNLRLYDPRTNQGSIV, GHNA…APLY, and GHGEKVLDIDWSNPKYICSGGADNTVRVFKSRKAGVETM.

It belongs to the WD repeat WDR12/YTM1 family.

It is found in the nucleus. The protein resides in the nucleolus. It localises to the nucleoplasm. Required for maturation of ribosomal RNAs and formation of the large ribosomal subunit. In Drosophila willistoni (Fruit fly), this protein is Ribosome biogenesis protein WDR12 homolog.